The sequence spans 199 residues: Holliday junction branch migration complex subunit RuvA (199 aa).

Residues 1 to 64 (MFAYIKGTVE…EDIAVLYGFG (64 aa)) are domain I. A domain II region spans residues 65-143 (TVEELTMFEM…KEQLTSSIPM (79 aa)). The interval 144–151 (TSPENNEV) is flexible linker. Positions 152–199 (TGDSVLSEAVSALMVLGYGSAEASSTISGIYEKGISVEELVKKALKSL) are domain III.

This sequence belongs to the RuvA family. In terms of assembly, homotetramer. Forms an RuvA(8)-RuvB(12)-Holliday junction (HJ) complex. HJ DNA is sandwiched between 2 RuvA tetramers; dsDNA enters through RuvA and exits via RuvB. An RuvB hexamer assembles on each DNA strand where it exits the tetramer. Each RuvB hexamer is contacted by two RuvA subunits (via domain III) on 2 adjacent RuvB subunits; this complex drives branch migration. In the full resolvosome a probable DNA-RuvA(4)-RuvB(12)-RuvC(2) complex forms which resolves the HJ.

It localises to the cytoplasm. Functionally, the RuvA-RuvB-RuvC complex processes Holliday junction (HJ) DNA during genetic recombination and DNA repair, while the RuvA-RuvB complex plays an important role in the rescue of blocked DNA replication forks via replication fork reversal (RFR). RuvA specifically binds to HJ cruciform DNA, conferring on it an open structure. The RuvB hexamer acts as an ATP-dependent pump, pulling dsDNA into and through the RuvAB complex. HJ branch migration allows RuvC to scan DNA until it finds its consensus sequence, where it cleaves and resolves the cruciform DNA. The polypeptide is Holliday junction branch migration complex subunit RuvA (Ruminiclostridium cellulolyticum (strain ATCC 35319 / DSM 5812 / JCM 6584 / H10) (Clostridium cellulolyticum)).